A 371-amino-acid polypeptide reads, in one-letter code: MSEMSLIMLAAGNSTRFNTKVKKQFLRLGNDPLWLYATKNLSSFYPFKKIVVTSSNITYMKKFTKNYEFIEGGDTRAESLKKALELIDSEFVMVSDVARVLVSKNLFDRLIENLDKADCITPALKVADTTLFDNEALQREKIKLIQTPQISKTKLLKKALDQNLEFTDDSTAIAAMGGKIWFVEGEENARKLTFKEDLKKLNLPTPSFEIFTGNGFDVHEFGENRPLLLAGVQIHPTMGLKAHSDGDVLAHSLTDAILGAAGLGDIGELYPDTDMKFKNANSMELLKQAYDKVREIGFELINIDICVMAQSPKLKDFKQAMQSNIAHTLDLDEFRINVKATTTEKLGFIGRKEGMAVLSSVNLKYFDWTRL.

A 2-C-methyl-D-erythritol 4-phosphate cytidylyltransferase region spans residues 1 to 210 (MSEMSLIMLA…LNLPTPSFEI (210 aa)). The segment at 211-371 (FTGNGFDVHE…NLKYFDWTRL (161 aa)) is 2-C-methyl-D-erythritol 2,4-cyclodiphosphate synthase. 2 residues coordinate a divalent metal cation: aspartate 217 and histidine 219. 4-CDP-2-C-methyl-D-erythritol 2-phosphate-binding positions include 217–219 (DVH) and 243–244 (HS). Residue histidine 251 coordinates a divalent metal cation. Residues 265 to 267 (DIG), 270 to 274 (YPDTD), 341 to 344 (TTTE), phenylalanine 348, and arginine 351 each bind 4-CDP-2-C-methyl-D-erythritol 2-phosphate.

This sequence in the N-terminal section; belongs to the IspD/TarI cytidylyltransferase family. IspD subfamily. In the C-terminal section; belongs to the IspF family. A divalent metal cation is required as a cofactor.

It carries out the reaction 2-C-methyl-D-erythritol 4-phosphate + CTP + H(+) = 4-CDP-2-C-methyl-D-erythritol + diphosphate. The enzyme catalyses 4-CDP-2-C-methyl-D-erythritol 2-phosphate = 2-C-methyl-D-erythritol 2,4-cyclic diphosphate + CMP. It participates in isoprenoid biosynthesis; isopentenyl diphosphate biosynthesis via DXP pathway; isopentenyl diphosphate from 1-deoxy-D-xylulose 5-phosphate: step 2/6. It functions in the pathway isoprenoid biosynthesis; isopentenyl diphosphate biosynthesis via DXP pathway; isopentenyl diphosphate from 1-deoxy-D-xylulose 5-phosphate: step 4/6. Functionally, bifunctional enzyme that catalyzes the formation of 4-diphosphocytidyl-2-C-methyl-D-erythritol from CTP and 2-C-methyl-D-erythritol 4-phosphate (MEP) (IspD), and catalyzes the conversion of 4-diphosphocytidyl-2-C-methyl-D-erythritol 2-phosphate (CDP-ME2P) to 2-C-methyl-D-erythritol 2,4-cyclodiphosphate (ME-CPP) with a corresponding release of cytidine 5-monophosphate (CMP) (IspF). The chain is Bifunctional enzyme IspD/IspF from Campylobacter jejuni (strain RM1221).